We begin with the raw amino-acid sequence, 281 residues long: MAETQNDPLLPGYSFNAHLVAGLTPIEANGYLDFFIDRPLGMKGYILNLTIRGEGVINNNGEQFVCRPGDILLFPPGEIHHYGRHPDASEWYHQWVYFRPRAYWQEWLTWPTIFAQTGFFRPDEARQPHFSELFGQIISAGQGEGRYSELLAINLLEQLLLRRMAVINESLHPPMDSRVRDACQYISDHLADSHFDIASVAQHVCLSPSRLSHLFRQQLGISVLSWREDQRISQAKLLLSTTRMPIATVGRNVGFDDQLYFSRVFKKCTGASPSEFRAGCE.

Positions 8, 24, 38, 82, and 93 each coordinate alpha-L-arabinopyanose. Positions 180–279 (RDACQYISDH…GASPSEFRAG (100 aa)) constitute an HTH araC/xylS-type domain. 2 DNA-binding regions (H-T-H motif) span residues 198–219 (ASVAQHVCLSPSRLSHLFRQQL) and 246–269 (IATVGRNVGFDDQLYFSRVFKKCT).

In terms of assembly, homodimer.

The protein resides in the cytoplasm. In terms of biological role, transcription factor that regulates the expression of several genes involved in the transport and metabolism of L-arabinose. This Salmonella typhimurium (strain LT2 / SGSC1412 / ATCC 700720) protein is Arabinose operon regulatory protein.